Consider the following 375-residue polypeptide: Cyclic AMP receptor 2 (375 aa).

Over M1–Q10 the chain is Extracellular. The chain crosses the membrane as a helical span at residues R11–I30. Residues G31–K44 lie on the Cytoplasmic side of the membrane. The helical transmembrane segment at I45–L65 threads the bilayer. Over L66 to A82 the chain is Extracellular. A helical transmembrane segment spans residues I83–V108. At R109 to K119 the chain is on the cytoplasmic side. A helical transmembrane segment spans residues F120–S138. Over T139–G161 the chain is Extracellular. The helical transmembrane segment at L162 to L180 threads the bilayer. Residues T181–Q204 are Cytoplasmic-facing. S192 carries the phosphoserine modification. A helical membrane pass occupies residues F205–V223. The Extracellular portion of the chain corresponds to N224–P234. The helical transmembrane segment at T235 to N259 threads the bilayer. The Cytoplasmic segment spans residues N260 to I375. 2 positions are modified to phosphoserine: S298 and S303. The segment at P338 to I375 is disordered. Residues H346–H358 are compositionally biased toward basic residues. A compositionally biased stretch (low complexity) spans Y359–I375.

Belongs to the G-protein coupled receptor 5 family. In terms of processing, C-terminal Ser or Thr residues may be phosphorylated.

Its subcellular location is the membrane. Functionally, receptor for cAMP. Coordinates the aggregation of individual cells into a multicellular organism and regulates the expression of a large number of developmentally regulated genes. The activity of this receptor is mediated by G proteins. Plays a key role during tip formation and late development; involved in cAMP-directed patterning of pre stalk cells as they sort before and during tip formation. This chain is Cyclic AMP receptor 2 (carB), found in Dictyostelium discoideum (Social amoeba).